Reading from the N-terminus, the 244-residue chain is NAD reductase coq12 (244 aa).

Residues 131-158 (NPLMNSEKNSTSVEDLPGSNRTQQTSSH) are disordered. Residues 132 to 158 (PLMNSEKNSTSVEDLPGSNRTQQTSSH) show a composition bias toward polar residues.

The protein localises to the mitochondrion. The enzyme catalyses a reduced flavin + NAD(+) = an oxidized flavin + NADH + 2 H(+). Functionally, NADH-dependent flavin reductase that acts in the coenzyme Q biosynthetic pathway. Required for synthesis of the p-hydroxybenzoic acid (PHB) precursor to form a quinone backbone. This Schizosaccharomyces pombe (strain 972 / ATCC 24843) (Fission yeast) protein is NAD reductase coq12.